The following is a 392-amino-acid chain: Trans-2-enoyl-CoA reductase [NADH] (392 aa).

Residues 74–75 (FE), 111–112 (DA), and 141–142 (LA) each bind NAD(+). Position 227 (Tyr227) interacts with substrate. The active-site Proton donor is Tyr237. Residues Lys246 and 276–278 (VVT) each bind NAD(+).

The protein belongs to the TER reductase family. Monomer.

It carries out the reaction a 2,3-saturated acyl-CoA + NAD(+) = a (2E)-enoyl-CoA + NADH + H(+). It participates in lipid metabolism; fatty acid biosynthesis. In terms of biological role, involved in the fatty acid synthesis (FAS II). Catalyzes the reduction of a carbon-carbon double bond in an enoyl moiety that is covalently linked to a coenzyme A (CoA). The chain is Trans-2-enoyl-CoA reductase [NADH] from Brachyspira hyodysenteriae (strain ATCC 49526 / WA1).